Reading from the N-terminus, the 531-residue chain is Cytochrome P450 monooxygenase ffsD (531 aa).

Residues 40–60 form a helical membrane-spanning segment; it reads VGALLGISLSVVLLLWVISVV. Cys475 is a heme binding site.

Belongs to the cytochrome P450 family. It depends on heme as a cofactor.

It is found in the membrane. It functions in the pathway mycotoxin biosynthesis. Its function is as follows. Cytochrome P450 monooxygenase; part of the gene cluster that mediates the biosynthesis of the cytotoxic leucine-containing cytochalasans, including aspochalasin C, aspochalasin E, TMC-169, flavichalasine F, aspergillin PZ, aspochalasin M and flavichalasine G. The first step in the pathway is catalyzed by the hybrid PKS-NRPS ffsA that utilizes 8 units of malonyl-CoA to iteratively assemble the octaketide chain before addition of L-leucine by the C-terminal NRPS modules. Because ffsA lacks a designated enoylreductase (ER) domain, the required activity is provided the enoyl reductase fssC. The methyltransferase (MT) domain of ffsA catalyzes the alpha-methylation at C10 and C14 using S-adenosyl-L-methionine as the methyl-donating cosubstrate. Reduction by the hydrolyase ffsE, followed by dehydration and intra-molecular Diels-Alder cyclization by the Diels-Alderase ffsF then yield the required isoindolone-fused macrocycle. A number of oxidative steps catalyzed by the tailoring cytochrome P450 monooxygenase ffsD, the FAD-linked oxidoreductase ffsJ and the short-chain dehydrogenase/reductase ffsI, are further required to afford the final products. The protein is Cytochrome P450 monooxygenase ffsD of Aspergillus flavipes.